The sequence spans 150 residues: Ribosome maturation factor RimP (150 aa).

This sequence belongs to the RimP family.

The protein localises to the cytoplasm. Functionally, required for maturation of 30S ribosomal subunits. The protein is Ribosome maturation factor RimP of Thermotoga neapolitana (strain ATCC 49049 / DSM 4359 / NBRC 107923 / NS-E).